The primary structure comprises 220 residues: Ribose-5-phosphate isomerase A (220 aa).

Substrate is bound by residues T28–T31, D81–D84, and K94–G97. E103 functions as the Proton acceptor in the catalytic mechanism. K121 serves as a coordination point for substrate.

The protein belongs to the ribose 5-phosphate isomerase family. As to quaternary structure, homodimer.

The catalysed reaction is aldehydo-D-ribose 5-phosphate = D-ribulose 5-phosphate. The protein operates within carbohydrate degradation; pentose phosphate pathway; D-ribose 5-phosphate from D-ribulose 5-phosphate (non-oxidative stage): step 1/1. In terms of biological role, catalyzes the reversible conversion of ribose-5-phosphate to ribulose 5-phosphate. This chain is Ribose-5-phosphate isomerase A, found in Leptothrix cholodnii (strain ATCC 51168 / LMG 8142 / SP-6) (Leptothrix discophora (strain SP-6)).